Consider the following 392-residue polypeptide: ATP-dependent RNA helicase eIF4A (392 aa).

A Q motif motif is present at residues 19–47 (DTFDDMNLKPELLRGIYAYGFERPSAIQQ). The Helicase ATP-binding domain occupies 50-220 (IMPILGERDV…TKFMRDPIRI (171 aa)). Residue 63–70 (AQSGTGKT) coordinates ATP. Ser65 bears the Phosphoserine mark. The DEAD box signature appears at 168-171 (DEAD). The Helicase C-terminal domain occupies 231 to 392 (GIKQFYVAVE…EMPMNIADLI (162 aa)).

Belongs to the DEAD box helicase family. eIF4A subfamily. In terms of assembly, component of the eIF4F complex, which composition varies with external and internal environmental conditions. It is composed of at least eIF4A, eIF4E and eIF4G.

It localises to the cytoplasm. The catalysed reaction is ATP + H2O = ADP + phosphate + H(+). Its function is as follows. ATP-dependent RNA helicase which is a subunit of the eIF4F complex involved in cap recognition and is required for mRNA binding to ribosome. In the current model of translation initiation, eIF4A unwinds RNA secondary structures in the 5'-UTR of mRNAs which is necessary to allow efficient binding of the small ribosomal subunit, and subsequent scanning for the initiator codon. The protein is ATP-dependent RNA helicase eIF4A (tif1) of Schizosaccharomyces pombe (strain 972 / ATCC 24843) (Fission yeast).